The chain runs to 268 residues: Phosphatidylglycerol--prolipoprotein diacylglyceryl transferase (268 aa).

Transmembrane regions (helical) follow at residues Val-10–Ile-30, Leu-56–Tyr-76, Trp-92–Phe-112, Phe-120–Ile-140, Pro-174–Phe-194, Met-202–Val-222, and Trp-236–Trp-256. Arg-139 serves as a coordination point for a 1,2-diacyl-sn-glycero-3-phospho-(1'-sn-glycerol).

The protein belongs to the Lgt family.

It is found in the cell inner membrane. The catalysed reaction is L-cysteinyl-[prolipoprotein] + a 1,2-diacyl-sn-glycero-3-phospho-(1'-sn-glycerol) = an S-1,2-diacyl-sn-glyceryl-L-cysteinyl-[prolipoprotein] + sn-glycerol 1-phosphate + H(+). It functions in the pathway protein modification; lipoprotein biosynthesis (diacylglyceryl transfer). Its function is as follows. Catalyzes the transfer of the diacylglyceryl group from phosphatidylglycerol to the sulfhydryl group of the N-terminal cysteine of a prolipoprotein, the first step in the formation of mature lipoproteins. The polypeptide is Phosphatidylglycerol--prolipoprotein diacylglyceryl transferase (Pseudomonas putida (strain ATCC 47054 / DSM 6125 / CFBP 8728 / NCIMB 11950 / KT2440)).